Reading from the N-terminus, the 378-residue chain is Protein RecA (378 aa).

79 to 86 serves as a coordination point for ATP; that stretch reads GPESSGKT.

It belongs to the RecA family.

It localises to the cytoplasm. Functionally, can catalyze the hydrolysis of ATP in the presence of single-stranded DNA, the ATP-dependent uptake of single-stranded DNA by duplex DNA, and the ATP-dependent hybridization of homologous single-stranded DNAs. It interacts with LexA causing its activation and leading to its autocatalytic cleavage. The sequence is that of Protein RecA from Streptococcus pyogenes serotype M1.